Consider the following 962-residue polypeptide: Protein lin-36 (962 aa).

Disordered regions lie at residues 1 to 53 (MSEE…ETEG) and 74 to 99 (TSSGEVLDESQVTPTKQASSSQPREE). Over residues 23 to 40 (DSHVTVHSVEQDSQHSGE) the composition is skewed to basic and acidic residues. Over residues 74–95 (TSSGEVLDESQVTPTKQASSSQ) the composition is skewed to polar residues. The segment at 161 to 249 (LTHKPCTVCN…IEAFGVPVAI (89 aa)) adopts a THAP-type zinc-finger fold. Basic and acidic residues-rich tracts occupy residues 452-472 (KAEESAQGTKEQESSQKKHAE) and 534-570 (SHEEEHDPTPESVEREPTVSPNDPRERLRLKERDEQF). Disordered regions lie at residues 452–575 (KAEE…KMVQ), 612–676 (IAAT…PEER), 744–788 (QEKG…SASS), and 932–962 (DPKWRELQQQQQQQQQQQEQFPGQGSSDSQQ). Residues 626 to 637 (SSEQTPEPTTSQ) are compositionally biased toward low complexity. Basic and acidic residues predominate over residues 647–658 (KTKESAVQKVEK). A compositionally biased stretch (low complexity) spans 939-951 (QQQQQQQQQQQEQ). A compositionally biased stretch (polar residues) spans 952–962 (FPGQGSSDSQQ).

Expressed in vulval precursor P(3-8).p cells and their descendants, neurons of the head, tail and ventral cord, hypodermal and intestinal cells and germline cells.

The protein resides in the nucleus. In terms of biological role, required to negatively regulate vulval development. Antagonizes Ras-mediated vulval induction. Acts cell autonomously. The sequence is that of Protein lin-36 (lin-36) from Caenorhabditis elegans.